Here is a 338-residue protein sequence, read N- to C-terminus: Large ribosomal subunit protein uL10 (338 aa).

The tract at residues 298-338 is disordered; the sequence is TVQQSQSQQPAAEEKKEEKKEEEKKGPSEEEIASGLASLFG. Basic and acidic residues predominate over residues 309–325; the sequence is AEEKKEEKKEEEKKGPS.

It belongs to the universal ribosomal protein uL10 family. In terms of assembly, part of the 50S ribosomal subunit. Forms part of the ribosomal stalk which helps the ribosome interact with GTP-bound translation factors. Forms a heptameric L10(L12)2(L12)2(L12)2 complex, where L10 forms an elongated spine to which the L12 dimers bind in a sequential fashion.

Functionally, forms part of the ribosomal stalk, playing a central role in the interaction of the ribosome with GTP-bound translation factors. The sequence is that of Large ribosomal subunit protein uL10 from Saccharolobus solfataricus (strain ATCC 35092 / DSM 1617 / JCM 11322 / P2) (Sulfolobus solfataricus).